We begin with the raw amino-acid sequence, 317 residues long: Lipoyl synthase (317 aa).

[4Fe-4S] cluster is bound by residues Cys-59, Cys-64, Cys-70, Cys-85, Cys-89, Cys-92, and Ser-298. The Radical SAM core domain maps to 71–287 (WSQRHASFMI…AKIGKAKGFL (217 aa)).

Belongs to the radical SAM superfamily. Lipoyl synthase family. [4Fe-4S] cluster is required as a cofactor.

It is found in the cytoplasm. It catalyses the reaction [[Fe-S] cluster scaffold protein carrying a second [4Fe-4S](2+) cluster] + N(6)-octanoyl-L-lysyl-[protein] + 2 oxidized [2Fe-2S]-[ferredoxin] + 2 S-adenosyl-L-methionine + 4 H(+) = [[Fe-S] cluster scaffold protein] + N(6)-[(R)-dihydrolipoyl]-L-lysyl-[protein] + 4 Fe(3+) + 2 hydrogen sulfide + 2 5'-deoxyadenosine + 2 L-methionine + 2 reduced [2Fe-2S]-[ferredoxin]. It participates in protein modification; protein lipoylation via endogenous pathway; protein N(6)-(lipoyl)lysine from octanoyl-[acyl-carrier-protein]: step 2/2. In terms of biological role, catalyzes the radical-mediated insertion of two sulfur atoms into the C-6 and C-8 positions of the octanoyl moiety bound to the lipoyl domains of lipoate-dependent enzymes, thereby converting the octanoylated domains into lipoylated derivatives. In Bartonella bacilliformis (strain ATCC 35685 / KC583 / Herrer 020/F12,63), this protein is Lipoyl synthase.